Reading from the N-terminus, the 311-residue chain is Porphobilinogen deaminase (311 aa).

Cysteine 245 carries the S-(dipyrrolylmethanemethyl)cysteine modification.

It belongs to the HMBS family. Monomer. Dipyrromethane is required as a cofactor.

It carries out the reaction 4 porphobilinogen + H2O = hydroxymethylbilane + 4 NH4(+). It functions in the pathway porphyrin-containing compound metabolism; protoporphyrin-IX biosynthesis; coproporphyrinogen-III from 5-aminolevulinate: step 2/4. Tetrapolymerization of the monopyrrole PBG into the hydroxymethylbilane pre-uroporphyrinogen in several discrete steps. In Acinetobacter baylyi (strain ATCC 33305 / BD413 / ADP1), this protein is Porphobilinogen deaminase.